The sequence spans 337 residues: UDP-3-O-acylglucosamine N-acyltransferase (337 aa).

H238 (proton acceptor) is an active-site residue.

This sequence belongs to the transferase hexapeptide repeat family. LpxD subfamily. In terms of assembly, homotrimer.

The enzyme catalyses a UDP-3-O-[(3R)-3-hydroxyacyl]-alpha-D-glucosamine + a (3R)-hydroxyacyl-[ACP] = a UDP-2-N,3-O-bis[(3R)-3-hydroxyacyl]-alpha-D-glucosamine + holo-[ACP] + H(+). The protein operates within bacterial outer membrane biogenesis; LPS lipid A biosynthesis. Catalyzes the N-acylation of UDP-3-O-acylglucosamine using 3-hydroxyacyl-ACP as the acyl donor. Is involved in the biosynthesis of lipid A, a phosphorylated glycolipid that anchors the lipopolysaccharide to the outer membrane of the cell. This Xanthomonas axonopodis pv. citri (strain 306) protein is UDP-3-O-acylglucosamine N-acyltransferase.